Here is a 253-residue protein sequence, read N- to C-terminus: Putative tyrosine-protein phosphatase OCA1 (253 aa).

Residues 1-21 are compositionally biased toward basic and acidic residues; it reads MHRTSIVEELERHQQDQKADQ. Residues 1-84 are disordered; sequence MHRTSIVEEL…PRMKTIVKPP (84 aa). Residues 27–65 show a composition bias toward polar residues; sequence SDASNSALQESSDPRLSTTDNTNTPEINVNDQQQEQQVA. One can recognise a Tyrosine-protein phosphatase domain in the interval 93-249; sequence NFGPVERNLY…IIVYPESAPE (157 aa). C186 acts as the Phosphocysteine intermediate in catalysis.

The protein belongs to the protein-tyrosine phosphatase family.

It is found in the cytoplasm. The catalysed reaction is O-phospho-L-tyrosyl-[protein] + H2O = L-tyrosyl-[protein] + phosphate. Functionally, putative tyrosine-protein phosphatase required for protection against superoxide stress. The sequence is that of Putative tyrosine-protein phosphatase OCA1 (OCA1) from Yarrowia lipolytica (strain CLIB 122 / E 150) (Yeast).